The following is a 1857-amino-acid chain: Fer-1-like protein 6 (1857 aa).

The Cytoplasmic portion of the chain corresponds to 1 to 1824; it reads MFGLKVKKKR…YLIWKNYKKY (1824 aa). The tract at residues 15–63 is disordered; that stretch reads KGLILANKAAKDSQGDTEALQEEPSHQEGPRGDLVHDDASIFPVPSASP. Positions 37–53 are enriched in basic and acidic residues; the sequence is EPSHQEGPRGDLVHDDA. C2 domains lie at 65–181 and 225–356; these read RRSK…QFCN and PIEK…DKGF. The span at 426–447 shows a compositional bias: basic and acidic residues; that stretch reads SKDKDSKSSKGKDKADKTEDGK. The tract at residues 426 to 469 is disordered; sequence SKDKDSKSSKGKDKADKTEDGKSQQASNKTNSTEVEVESFDVPP. Residues 448 to 459 show a composition bias toward polar residues; it reads SQQASNKTNSTE. 2 consecutive C2 domains span residues 810–937 and 969–1099; these read GTNH…RLCY and PVEP…LAPI. D842, D848, D904, and D906 together coordinate Ca(2+). 3 disordered regions span residues 1101 to 1148, 1161 to 1203, and 1224 to 1246; these read QVDG…VVPD, PDSS…RTIA, and AQKAKERNPKGKKGNTEAKPDEV. Polar residues predominate over residues 1113–1129; that stretch reads DSLTATESSGAHSSSQD. A compositionally biased stretch (basic and acidic residues) spans 1178–1189; that stretch reads PPKDGKPKDPRK. Residues 1190–1200 are compositionally biased toward basic residues; it reads PSRRSTKRRKR. A compositionally biased stretch (basic and acidic residues) spans 1226–1245; sequence KAKERNPKGKKGNTEAKPDE. 2 C2 domains span residues 1338 to 1457 and 1578 to 1729; these read DSGQ…AICG and DMPQ…KACD. Residues D1372, D1378, D1427, D1429, and D1435 each coordinate Ca(2+). Residues 1825–1845 traverse the membrane as a helical segment; that stretch reads IIIAFILIILIIFLVLFIYTL. At 1846 to 1857 the chain is on the extracellular side; that stretch reads PGAISRRIVVGS.

This sequence belongs to the ferlin family. Ca(2+) is required as a cofactor.

It is found in the membrane. This is Fer-1-like protein 6 (FER1L6) from Homo sapiens (Human).